Consider the following 180-residue polypeptide: Ribulose bisphosphate carboxylase small subunit, chloroplastic 2 (180 aa).

The transit peptide at Met-1–Gln-54 directs the protein to the chloroplast.

The protein belongs to the RuBisCO small chain family. As to quaternary structure, heterohexadecamer of 8 large and 8 small subunits.

It localises to the plastid. It is found in the chloroplast. RuBisCO catalyzes two reactions: the carboxylation of D-ribulose 1,5-bisphosphate, the primary event in carbon dioxide fixation, as well as the oxidative fragmentation of the pentose substrate. Both reactions occur simultaneously and in competition at the same active site. Although the small subunit is not catalytic it is essential for maximal activity. The protein is Ribulose bisphosphate carboxylase small subunit, chloroplastic 2 of Mesembryanthemum crystallinum (Common ice plant).